An 804-amino-acid polypeptide reads, in one-letter code: Lon protease (804 aa).

Residues 1–23 (MSADSENETSESSPAGEATASTS) are disordered. The Lon N-terminal domain maps to 30-224 (LILLPVRNAV…KVLDAVAGRI (195 aa)). 376–383 (GPPGVGKT) lines the ATP pocket. A Lon proteolytic domain is found at 612 to 793 (TSLPGVVTGL…DDAVREIIED (182 aa)). Residues serine 699 and lysine 742 contribute to the active site.

Belongs to the peptidase S16 family. In terms of assembly, homohexamer. Organized in a ring with a central cavity.

Its subcellular location is the cytoplasm. It carries out the reaction Hydrolysis of proteins in presence of ATP.. In terms of biological role, ATP-dependent serine protease that mediates the selective degradation of mutant and abnormal proteins as well as certain short-lived regulatory proteins. Required for cellular homeostasis and for survival from DNA damage and developmental changes induced by stress. Degrades polypeptides processively to yield small peptide fragments that are 5 to 10 amino acids long. Binds to DNA in a double-stranded, site-specific manner. The polypeptide is Lon protease (Paraburkholderia phytofirmans (strain DSM 17436 / LMG 22146 / PsJN) (Burkholderia phytofirmans)).